Consider the following 713-residue polypeptide: Transcription activator of gluconeogenesis CPC735_053490 (713 aa).

The interval 1 to 70 (MTANAINGPV…NAKDPLRPRR (70 aa)) is disordered. The span at 19-56 (GDNNKSADTTMADQGTRPESQPQGQNNGAKPQNGQTKP) shows a compositional bias: polar residues. Positions 77–105 (CFACQRAHLTCGDERPCQRCIKRGIQNAC) form a DNA-binding region, zn(2)-C6 fungal-type. Polar residues predominate over residues 145–159 (PLTRNGSNSKTNFYP). Disordered regions lie at residues 145-229 (PLTR…ASGQ), 274-318 (GAGE…LFGD), 541-564 (GGSS…GMDI), and 623-665 (GTTS…QRKW). Low complexity predominate over residues 160–171 (QQQSSFNNFYQN). The span at 191–212 (FPSQSPVSPTFNMTANPAASGN) shows a compositional bias: polar residues. A compositionally biased stretch (low complexity) spans 213–229 (QGLPSSLSASNSNASGQ). Composition is skewed to polar residues over residues 295 to 312 (SGTY…TGQP), 541 to 558 (GGSS…SFTP), and 649 to 659 (GASNGQSQHSL).

Belongs to the ERT1/acuK family.

The protein localises to the nucleus. Transcription factor which regulates nonfermentable carbon utilization. Activator of gluconeogenetic genes. This chain is Transcription activator of gluconeogenesis CPC735_053490, found in Coccidioides posadasii (strain C735) (Valley fever fungus).